The following is a 440-amino-acid chain: IAA-amino acid hydrolase ILR1-like 4 (440 aa).

The signal sequence occupies residues 1 to 23; sequence MSFFKWVSFVLILHLLNPTLISC. Mn(2+) contacts are provided by Cys-134, His-136, Glu-170, His-194, and His-397. A Prevents secretion from ER motif is present at residues 437-440; sequence KDEL.

This sequence belongs to the peptidase M20 family. Mn(2+) is required as a cofactor. As to expression, expressed in leaves, stems, roots, siliques and flowers. Detected in the vascular tissue of cotyledons and roots, in adult leaves, stems, siliques, petals, hydathodes and in silique abscission zones and funicles.

It is found in the endoplasmic reticulum lumen. The enzyme catalyses a jasmonyl-L-amino acid + H2O = a jasmonate + an L-alpha-amino acid. Functionally, hydrolyzes certain amino acid conjugates of the plant growth regulator indole-3-acetic acid (IAA), including IAA-Ala, IAA-Asn, IAA-Cys, IAA-Glu, IAA-Met, IAA-Ser and IAA-Gly. Has a lower efficiency with IAA-Phe, IAA-Leu and IAA-Val and no activity with IAA-Ile. Important for IAA-Leu hydrolysis in roots. Also hydrolyzes amino acid conjugates of jasmonic acid and 12-hydroxy jasmonic acid. This Arabidopsis thaliana (Mouse-ear cress) protein is IAA-amino acid hydrolase ILR1-like 4.